The chain runs to 260 residues: 3'-5' ssDNA/RNA exonuclease TatD (260 aa).

Residues E92, H128, and H153 each contribute to the a divalent metal cation site.

This sequence belongs to the metallo-dependent hydrolases superfamily. TatD-type hydrolase family. TatD subfamily. As to quaternary structure, monomer. Mg(2+) is required as a cofactor.

It localises to the cytoplasm. Functionally, 3'-5' exonuclease that prefers single-stranded DNA and RNA. May play a role in the H(2)O(2)-induced DNA damage repair. The protein is 3'-5' ssDNA/RNA exonuclease TatD of Pectobacterium parmentieri (strain WPP163) (Pectobacterium wasabiae (strain WPP163)).